We begin with the raw amino-acid sequence, 226 residues long: Orotidine 5'-phosphate decarboxylase (226 aa).

Substrate contacts are provided by residues aspartate 8, lysine 30, 58 to 67 (DLKLYDIPNT), threonine 117, arginine 177, glutamine 186, glycine 206, and arginine 207. Residue lysine 60 is the Proton donor of the active site.

Belongs to the OMP decarboxylase family. Type 1 subfamily. Homodimer.

The enzyme catalyses orotidine 5'-phosphate + H(+) = UMP + CO2. The protein operates within pyrimidine metabolism; UMP biosynthesis via de novo pathway; UMP from orotate: step 2/2. Its function is as follows. Catalyzes the decarboxylation of orotidine 5'-monophosphate (OMP) to uridine 5'-monophosphate (UMP). This chain is Orotidine 5'-phosphate decarboxylase, found in Campylobacter concisus (strain 13826).